We begin with the raw amino-acid sequence, 101 residues long: Small ribosomal subunit protein uS14 (101 aa).

This sequence belongs to the universal ribosomal protein uS14 family. Part of the 30S ribosomal subunit. Contacts proteins S3 and S10.

Functionally, binds 16S rRNA, required for the assembly of 30S particles and may also be responsible for determining the conformation of the 16S rRNA at the A site. This is Small ribosomal subunit protein uS14 from Ruthia magnifica subsp. Calyptogena magnifica.